Reading from the N-terminus, the 1537-residue chain is Adhesion G protein-coupled receptor L3 (1537 aa).

The N-terminal stretch at 1–19 is a signal peptide; that stretch reads MWPPQLLILTMLLAPVVHG. The Extracellular segment spans residues 20 to 943; sequence GKHNERHPAL…VKHSDAVHDL (924 aa). The interval 53 to 80 is disordered; sequence PAAERSTAHRGQGPRGAARGVRGPGAPG. Residues 103-192 enclose the SUEL-type lectin domain; the sequence is SCESYPIELR…KYLEVQYECV (90 aa). 5 disulfides stabilise this stretch: Cys104–Cys134, Cys113–Cys191, Cys146–Cys178, Cys159–Cys165, and Cys203–Cys385. N-linked (GlcNAc...) asparagine glycosylation occurs at Asn161. The Olfactomedin-like domain maps to 202–461; that stretch reads LCPGLLKGVY…VVKYSLDFGP (260 aa). The interval 317-347 is interaction with FLRT3; the sequence is YHDTSPYRWGGKSDIDLAVDENGLWVIYATE. Residues Asp332, Asn380, Ala381, and Val435 each contribute to the Ca(2+) site. A disordered region spans residues 521–540; the sequence is RSTTASLPGRRNRSTSTPSP. Asn532, Asn617, Asn827, Asn840, Asn885, and Asn911 each carry an N-linked (GlcNAc...) asparagine glycan. In terms of domain architecture, GAIN-B spans 756 to 935; sequence DIVRENTDNI…AVLMAHVEVK (180 aa). Cystine bridges form between Cys886–Cys917 and Cys905–Cys919. Positions 886–935 are GPS; sequence CSFWSYSKRTMTGYWSTQGCRLLTTNKTHTTCSCNHLTNFAVLMAHVEVK. Residues 923-939 form a stachel region; the sequence is TNFAVLMAHVEVKHSDA. The helical transmembrane segment at 944-969 threads the bilayer; that stretch reads LLDVITWVGILLSLVCLLICIFTFCF. Residues 970-975 lie on the Cytoplasmic side of the membrane; sequence FRGLQS. A helical transmembrane segment spans residues 976–999; sequence DRNTIHKNLCISLFVAELLFLIGI. N-linked (GlcNAc...) asparagine glycosylation occurs at Asn1000. Residues 1000–1006 lie on the Extracellular side of the membrane; sequence NRTDQPI. The chain crosses the membrane as a helical span at residues 1007 to 1034; sequence ACAVFAALLHFFFLAAFTWMFLEGVQLY. The cysteines at positions 1008 and 1080 are disulfide-linked. The Cytoplasmic segment spans residues 1035–1048; sequence IMLVEVFESEHSRR. The chain crosses the membrane as a helical span at residues 1049–1071; the sequence is KYFYLVGYGMPALIVAVSAAVDY. Topologically, residues 1072–1086 are extracellular; the sequence is RSYGTDKVCWLRLDT. Residues 1087–1112 form a helical membrane-spanning segment; the sequence is YFIWSFIGPATLIIMLNVIFLGIALY. At 1113–1142 the chain is on the cytoplasmic side; sequence KMFHHTAILKPESGCLDNINYEDNRPFIKS. The helical transmembrane segment at 1143–1163 threads the bilayer; it reads WVIGAIALLCLLGLTWAFGLM. At 1164–1168 the chain is on the extracellular side; sequence YINES. N-linked (GlcNAc...) asparagine glycosylation is present at Asn1166. A helical membrane pass occupies residues 1169 to 1195; the sequence is TVIMAYLFTIFNSLQGMFIFIFHCVLQ. Topologically, residues 1196–1537 are cytoplasmic; sequence KKVRKEYGKC…KGPAHLVTSL (342 aa). Residues 1213–1237 form a disordered region; it reads GKSTESSIGSGKTSGSRTPGRYSTG. 2 positions are modified to phosphoserine: Ser1254 and Ser1522. The segment at 1512–1537 is disordered; that stretch reads FIVPPNKDGASPEGTSKGPAHLVTSL. Residues 1532–1537 carry the PDZ-binding motif; it reads HLVTSL.

Belongs to the G-protein coupled receptor 2 family. LN-TM7 subfamily. In terms of assembly, heterodimer of 2 chains generated by proteolytic processing; the large extracellular N-terminal fragment and the membrane-bound C-terminal fragment predominantly remain associated and non-covalently linked. Interacts (via olfactomedin-like domain) with FLRT1 (via extracellular domain). Interacts (via olfactomedin-like domain) with FLRT2 (via extracellular domain). Interacts (via olfactomedin-like domain) with FLRT3 (via extracellular domain); the interaction is direct. Interacts (via extracellular domain) with TENM1. Interacts (via extracellular domain) with TENM2. Interacts (via extracellular domain) with TENM3. Identified in a complex with FLRT3 and UNC5B; does not interact with UNC5B by itself. Identified in a complex with FLRT3 and UNC5D; does not interact with UNC5D by itself. As to quaternary structure, interacts (via PDZ-binding motif) with SHANK3. Interacts (via PDZ-binding motif) with DLG4. Post-translationally, autoproteolytically processed at the GPS region of the GAIN-B domain; this cleavage modulates receptor activity. In terms of processing, O-glycosylated (major) and N-glycosylated. In terms of tissue distribution, localizes to postsynaptic spines in non-overlapping dendritic domains of CA1-region pyramidal neurons: specifically localizes to excitatory synapses in the S.oriens and S.radiatum, corresponding to distinct presynaptic inputs onto CA1-region pyramidal neurons.

The protein localises to the cell membrane. It localises to the postsynaptic cell membrane. Its subcellular location is the cell projection. It is found in the axon. The protein resides in the cell junction. With respect to regulation, forms a heterodimer of 2 chains generated by proteolytic processing that remain associated through non-covalent interactions mediated by the GAIN-B domain. In the inactivated receptor, the Stachel sequence (also named stalk) is embedded in the GAIN-B domain, where it adopts a beta-strand conformation. On activation, the Stachel moves into the 7 transmembrane region and adopts a twisted hook-shaped configuration that forms contacts within the receptor, leading to coupling of a G-alpha protein, which activates signaling. The cleaved GAIN-B and N-terminal domains can then dissociate from the rest of the receptor. Orphan adhesion G-protein coupled receptor (aGPCR), which mediates synapse specificity. Ligand binding causes a conformation change that triggers signaling via guanine nucleotide-binding proteins (G proteins) and modulates the activity of downstream effectors. ADGRL3 is coupled with different classes of G alpha proteins, such as G(12)/G(13), G(s), G(i) or G(q), depending on the context. Coupling to G(12)/G(13) G proteins, which mediates the activation Rho small GTPases is the most efficient. Following G-protein coupled receptor activation, associates with cell adhesion molecules that are expressed at the surface of adjacent cells to direct synapse specificity. Specifically mediates the establishment of Schaffer-collateral synapses formed by CA3-region axons on CA1-region pyramidal neurons in the hippocampus. Localizes to postsynaptic spines in excitatory synapses in the S.oriens and S.radiatum and interacts with presynaptic cell adhesion molecules FLRT3 and TENM2, promoting synapse formation. Plays a role in the development of glutamatergic synapses in the cortex. Important in determining the connectivity rates between the principal neurons in the cortex. Its function is as follows. Orphan adhesion G-protein coupled receptor (aGPCR), which mediates synapse specificity. Ligand binding causes a conformation change that triggers signaling via guanine nucleotide-binding proteins (G proteins) and modulates the activity of downstream effectors, such as adenylate cyclase. Isoform 1 is specifically coupled to G(s) G proteins and mediates activation of adenylate cyclase activity. Following G-protein coupled receptor activation, undergoes liquid-liquid phase transition, associates with (1) cell adhesion molecules that are expressed at the surface of adjacent cells, as well as (2) PDZ-containing proteins, such as SHANK3 and DLG4, in the cytoplasm to direct synapse formation. In terms of biological role, orphan adhesion G-protein coupled receptor (aGPCR). Ligand binding causes a conformation change that triggers signaling via guanine nucleotide-binding proteins (G proteins) and modulates the activity of downstream effectors, such as RhoA pathway. Isoform 7 is coupled to G(12) and/or G(13) G proteins (GNA12 and GNA13, respectively) and mediates the activation Rho small GTPases. This is Adhesion G protein-coupled receptor L3 from Mus musculus (Mouse).